A 523-amino-acid polypeptide reads, in one-letter code: Cytochrome P450 CYP82J17 (523 aa).

A helical membrane pass occupies residues 4-24 (FLSQPITIVLAILSVLLYNIW). Cys462 is a binding site for heme.

Belongs to the cytochrome P450 family. In terms of tissue distribution, mainly expressed in leaves and seed pods and, to a lower extent, in flowers and stems.

The protein resides in the membrane. It functions in the pathway steroid metabolism; cholesterol metabolism. Involved in the biosynthesis of spiroketal steroid and saponin natural products from cholesterol such as diosgenin and analogs (e.g. furostanol and spirostanol), plant defense compounds used as main precursors for the industrial production of steroid hormones. During the 5,6-spiroketalization of cholesterol, may catalyze the 27-monohydroxylation of furostanol-type steroid to an intermediate product that undergoes a stereospecific formation of the terminal heterocycle to yield diosgenin. The sequence is that of Cytochrome P450 CYP82J17 from Trigonella foenum-graecum (Fenugreek).